The sequence spans 88 residues: KTx type I (88 aa).

The N-terminal stretch at 1-19 (MKTTLVVVVLACIVALTSA) is a signal peptide. The 35-residue stretch at 54 to 88 (CKDVLSEFSCGVLKKDGQCNKADIQAKCKLTCDKC) folds into the ShKT domain. Disulfide bonds link C54–C88, C63–C81, and C72–C85.

The protein belongs to the sea anemone type 1 potassium channel toxin family. In terms of tissue distribution, expressed both outside and in acontia, a specialised envenomation structure laden with batteries of venom-containing nematocysts found only in the superfamily Metridioidea.

It localises to the secreted. The protein localises to the nematocyst. Inhibits voltage-gated potassium channels (Kv1/KCNA). This is KTx type I from Calliactis polypus (Hermit crab anemone).